We begin with the raw amino-acid sequence, 649 residues long: ENTH domain-containing protein C19F8.03c (649 aa).

Residues S2 to P136 enclose the ENTH domain. 3 disordered regions span residues Y280 to E382, L409 to S440, and F590 to S649. S285 and S287 each carry phosphoserine. The segment covering P299 to P308 has biased composition (basic residues). Composition is skewed to polar residues over residues E313 to Q326 and P340 to I349. The span at Q352 to L381 shows a compositional bias: acidic residues. 3 stretches are compositionally biased toward polar residues: residues L409–P418, T614–S624, and A635–S649. T414 bears the Phosphothreonine mark. Phosphoserine is present on S417.

Its subcellular location is the cytoplasm. The chain is ENTH domain-containing protein C19F8.03c from Schizosaccharomyces pombe (strain 972 / ATCC 24843) (Fission yeast).